The following is a 510-amino-acid chain: NAD(P)H-quinone oxidoreductase subunit 2 A, chloroplastic (510 aa).

13 consecutive transmembrane segments (helical) span residues 24 to 44 (LLLF…GLIL), 57 to 77 (IPWL…ALLF), 99 to 119 (IFQF…VEYI), 124 to 144 (MAIT…MFLC), 149 to 169 (LITI…LSGY), 183 to 203 (YLLM…WLYG), 227 to 247 (PGIS…LSPA), 295 to 315 (WHLL…LIAI), 323 to 343 (MLAY…IVGD), 354 to 374 (YMLF…LFGL), 395 to 415 (ALSL…AGFF), 418 to 438 (LYLF…IGLL), and 484 to 504 (MIVC…IIAI).

This sequence belongs to the complex I subunit 2 family. As to quaternary structure, NDH is composed of at least 16 different subunits, 5 of which are encoded in the nucleus.

Its subcellular location is the plastid. The protein localises to the chloroplast thylakoid membrane. It carries out the reaction a plastoquinone + NADH + (n+1) H(+)(in) = a plastoquinol + NAD(+) + n H(+)(out). It catalyses the reaction a plastoquinone + NADPH + (n+1) H(+)(in) = a plastoquinol + NADP(+) + n H(+)(out). NDH shuttles electrons from NAD(P)H:plastoquinone, via FMN and iron-sulfur (Fe-S) centers, to quinones in the photosynthetic chain and possibly in a chloroplast respiratory chain. The immediate electron acceptor for the enzyme in this species is believed to be plastoquinone. Couples the redox reaction to proton translocation, and thus conserves the redox energy in a proton gradient. The chain is NAD(P)H-quinone oxidoreductase subunit 2 A, chloroplastic from Panax ginseng (Korean ginseng).